The following is a 132-amino-acid chain: Pro-MCH 2 (132 aa).

The signal sequence occupies residues 1–24; it reads MRDSVLSVIFALALFLECYTPSMA. A disulfide bridge links Cys-120 with Cys-129.

This sequence belongs to the melanin-concentrating hormone family. Pituitary gland. Produced in neurons of lateral basal hypothalamus which project both to the brain and to the neural lobe of the pituitary gland from where MCH is released.

Its function is as follows. Plays a role in skin pigmentation by antagonizing the action of melanotropin alpha. Induces melanin concentration within the melanophores. May participate in the control of the hypothalamo-pituitary adrenal gland axis by inhibiting the release of ACTH. The polypeptide is Pro-MCH 2 (mch2) (Oncorhynchus keta (Chum salmon)).